We begin with the raw amino-acid sequence, 291 residues long: Cell division protein FtsX (291 aa).

At 1 to 18 (MSSNFDKFQKRRLISSYF) the chain is on the cytoplasmic side. Residues 19–39 (SVVLSVFLVLFLLGVLGLFII) traverse the membrane as a helical segment. At 40–162 (NSKKLADDFK…VNLVNDNIKK (123 aa)) the chain is on the periplasmic side. Residues 163–183 (VSMWILIISGFLTVIAVLLIN) form a helical membrane-spanning segment. Over 184–220 (SSLRLSIHSNRFIIKTMQMVGATKSFIRKPFVMRSVK) the chain is Cytoplasmic. A helical membrane pass occupies residues 221–241 (LGMLGALLAIIALIGLLFYVE). Residues 242 to 253 (TNFPGLGILEDK) lie on the Periplasmic side of the membrane. Residues 254–274 (ALIGLVLLAVFGLGVLITWVS) form a helical membrane-spanning segment. Residues 275-291 (THFATQRFLNLRTDDLY) are Cytoplasmic-facing.

Belongs to the ABC-4 integral membrane protein family. FtsX subfamily.

The protein resides in the cell inner membrane. Its function is as follows. Required for cell division and gliding motility. The polypeptide is Cell division protein FtsX (Flavobacterium johnsoniae (strain ATCC 17061 / DSM 2064 / JCM 8514 / BCRC 14874 / CCUG 350202 / NBRC 14942 / NCIMB 11054 / UW101) (Cytophaga johnsonae)).